We begin with the raw amino-acid sequence, 138 residues long: Large ribosomal subunit protein uL16 (138 aa).

Residues 1–13 (MLQPKRRKYRKEQ) show a composition bias toward basic residues. The tract at residues 1–20 (MLQPKRRKYRKEQKGRNTGI) is disordered.

This sequence belongs to the universal ribosomal protein uL16 family. As to quaternary structure, part of the 50S ribosomal subunit.

Functionally, binds 23S rRNA and is also seen to make contacts with the A and possibly P site tRNAs. This is Large ribosomal subunit protein uL16 from Paraburkholderia phytofirmans (strain DSM 17436 / LMG 22146 / PsJN) (Burkholderia phytofirmans).